The following is a 63-amino-acid chain: Large ribosomal subunit protein bL35 (63 aa).

This sequence belongs to the bacterial ribosomal protein bL35 family.

This is Large ribosomal subunit protein bL35 from Campylobacter jejuni subsp. doylei (strain ATCC BAA-1458 / RM4099 / 269.97).